Consider the following 176-residue polypeptide: Tubulin polymerization-promoting protein family member 3 (176 aa).

Alanine 2 is subject to N-acetylalanine. Positions 132-152 (TGSHKERFDESGKGKGIAGRQ) are disordered. Positions 134 to 144 (SHKERFDESGK) are enriched in basic and acidic residues.

The protein belongs to the TPPP family. Expressed in endometrium during the mid-secretory phase (LH + 7) (at protein level).

It localises to the cytoplasm. The protein resides in the cytoskeleton. Functionally, regulator of microtubule dynamic that has microtubule bundling activity. Required for embryo implantation; possibly by regulating beta-catenin. Also required for decidualization via regulation of beta-catenin. This chain is Tubulin polymerization-promoting protein family member 3, found in Homo sapiens (Human).